Consider the following 308-residue polypeptide: 2-methylisocitrate lyase (308 aa).

54 to 56 (SGG) is a substrate binding site. Mg(2+)-binding residues include aspartate 94 and aspartate 96. Substrate-binding positions include 131–132 (CG), arginine 166, glutamate 196, 224–226 (NIT), arginine 255, and arginine 284.

This sequence belongs to the isocitrate lyase/PEP mutase superfamily. Methylisocitrate lyase family. As to quaternary structure, homotetramer; dimer of dimers. Mg(2+) serves as cofactor.

It carries out the reaction (2S,3R)-3-hydroxybutane-1,2,3-tricarboxylate = pyruvate + succinate. It participates in organic acid metabolism; propanoate degradation. Its function is as follows. Involved in the catabolism of short chain fatty acids (SCFA) via the 2-methylcitrate cycle I (propionate degradation route). Catalyzes the thermodynamically favored C-C bond cleavage reaction of (2R,3S)-2-methylisocitrate to yield pyruvate and succinate via an alpha-carboxy-carbanion intermediate. The chain is 2-methylisocitrate lyase from Vibrio cholerae serotype O1 (strain ATCC 39315 / El Tor Inaba N16961).